The sequence spans 248 residues: DNA repair protein RecO (248 aa).

The protein belongs to the RecO family.

In terms of biological role, involved in DNA repair and RecF pathway recombination. The chain is DNA repair protein RecO from Bacillus mycoides (strain KBAB4) (Bacillus weihenstephanensis).